A 692-amino-acid polypeptide reads, in one-letter code: Ribonuclease J (692 aa).

The segment at M1–N91 is disordered. A compositionally biased stretch (basic and acidic residues) spans E9–R25. Over residues H57–Q79 the composition is skewed to basic residues. N6-acetyllysine occurs at positions 135 and 141. Residues H209, H211, D213, H214, H278, and D300 each contribute to the Zn(2+) site. N6-acetyllysine occurs at positions 324, 338, and 398. Residue H501 to H505 participates in substrate binding. The residue at position 512 (K512) is an N6-acetyllysine. A Zn(2+)-binding site is contributed by H527. K548, K635, and K650 each carry N6-acetyllysine.

This sequence belongs to the metallo-beta-lactamase superfamily. RNA-metabolizing metallo-beta-lactamase-like family. Bacterial RNase J subfamily. In terms of assembly, homodimer. Homotetramer; dimer of homodimers. Interacts with RNA helicase RhpA, might be a member of a minimal RNA degradosome complex. It depends on Zn(2+) as a cofactor. Post-translationally, acetylated on nine lysine residues. Some of the residues are acetylated by multiple different mechanisms. RimL is partially responsible for the acetylation of Lys-324, Lys-398 and Lys-650. HPB8_1270 homolog is partially responsible for the acetylation of Lys-324, Lys-398, Lys-512 and Lys-650. Acetyl-phosphate-mediated non-enzymatic acetylation pathway takes part in the acetylation of Lys-135, Lys-324, Lys-398, Lys-512 and Lys-650. Acetylation of the remaining residues Lys-141, Lys-338, Lys-548 and Lys-635 occurs by a yet undetermined mechanism. Acetylation on a number of these residues is important for growth regulation and proper cell morphology.

The protein resides in the cytoplasm. Catalytic activity is regulated by the balance between homodimers and homotetramers, with homotetramers being the active forms of this enzyme. Acetylation allosterically regulates the homooligomerization state and hence the catalytic activity. Functionally, an RNase that has 5'-3' exoribonuclease and endoribonuclease activity. Degrades 5'-monophosphorylated ssRNA and dsRNA, considerably more active on ssRNA. Association with RhpA significantly increases the dsRNase activity. Degrades RNA substrate with hairpin structures at both ends with low activity, but presence of RhpA significantly increases the activity on this substrate. Stimulates ATPase activity of RNA helicase RhpA. Involved in stabilization of mRNA but apparently not rRNA. This is Ribonuclease J from Helicobacter pylori (strain J99 / ATCC 700824) (Campylobacter pylori J99).